Reading from the N-terminus, the 323-residue chain is Movement protein (323 aa).

The stretch at 292 to 322 (SLLENKDENLLRSMSTKIDTLGKKLSLIYDN) forms a coiled coil.

The protein belongs to the caulimoviridae movement protein family. In terms of assembly, homotrimer, through the coiled-coil domain. Interacts with VAP.

The protein resides in the host cell junction. The protein localises to the host plasmodesma. Functionally, transports viral genome to neighboring plant cells directly through plasmosdesmata, without any budding. The movement protein allows efficient cell to cell propagation, by bypassing the host cell wall barrier. Acts by forming tubules structures that increase the size exclusion limit (SEL) of plasmodesmata, thereby allowing viral ribonucleocapsids to spread directly to neighboring cells. The chain is Movement protein from Figwort mosaic virus (strain DxS) (FMV).